The following is a 47-amino-acid chain: MKSIDLTILSLKRKGIRTEKVLKNQNPDRLSHMTDKNAQPKSKEKEE.

The tract at residues 19-47 (EKVLKNQNPDRLSHMTDKNAQPKSKEKEE) is disordered.

This is an uncharacterized protein from Bacillus subtilis (strain 168).